Consider the following 522-residue polypeptide: Signal transduction histidine-protein kinase/phosphatase MprB (522 aa).

The Cytoplasmic portion of the chain corresponds to methionine 1–leucine 30. A helical membrane pass occupies residues leucine 31–isoleucine 51. Residues serine 52–arginine 167 are Extracellular-facing. Residues tryptophan 168–valine 188 form a helical membrane-spanning segment. Over threonine 189–arginine 522 the chain is Cytoplasmic. Residues arginine 190 to glutamate 242 enclose the HAMP domain. In terms of domain architecture, Histidine kinase spans aspartate 250–serine 470. A Phosphohistidine; by autocatalysis modification is found at histidine 253. The tract at residues proline 467 to arginine 522 is disordered. Positions threonine 502–arginine 522 are enriched in polar residues.

Mg(2+) serves as cofactor. Requires Mn(2+) as cofactor. Autophosphorylated.

Its subcellular location is the cell membrane. It carries out the reaction ATP + protein L-histidine = ADP + protein N-phospho-L-histidine.. Functionally, member of the two-component regulatory system MprB/MprA which contributes to maintaining a balance among several systems involved in stress resistance and is required for establishment and maintenance of persistent infection in the host. In response to environmental signals MprB acts both as a membrane-associated protein kinase that undergoes autophosphorylation and subsequently transfers the phosphate to MprA, and a protein phosphatase that dephosphorylates phospho-MprA. The protein is Signal transduction histidine-protein kinase/phosphatase MprB (mprB) of Mycolicibacterium paratuberculosis (strain ATCC BAA-968 / K-10) (Mycobacterium paratuberculosis).